The chain runs to 66 residues: Small ribosomal subunit protein eS30 (66 aa).

A disordered region spans residues Met1–Lys35.

It belongs to the eukaryotic ribosomal protein eS30 family.

The sequence is that of Small ribosomal subunit protein eS30 (rps30-1) from Dictyostelium discoideum (Social amoeba).